A 426-amino-acid polypeptide reads, in one-letter code: High affinity 3',5'-cyclic-AMP phosphodiesterase 7A (426 aa).

Positions 80–402 (LDEDYNGQAK…ASWKGLQRQQ (323 aa)) constitute a PDEase domain. Residue His156 is the Proton donor of the active site. The a divalent metal cation site is built by His160, His196, Asp197, and Asp306.

The protein belongs to the cyclic nucleotide phosphodiesterase family. PDE7 subfamily. Interacts with CBFA2T3. It depends on a divalent metal cation as a cofactor.

The protein resides in the cytoplasm. Its subcellular location is the cytosol. It catalyses the reaction 3',5'-cyclic AMP + H2O = AMP + H(+). It participates in purine metabolism; 3',5'-cyclic AMP degradation; AMP from 3',5'-cyclic AMP: step 1/1. Hydrolyzes the second messenger cAMP, which is a key regulator of many important physiological processes. May have a role in muscle signal transduction. The chain is High affinity 3',5'-cyclic-AMP phosphodiesterase 7A (Pde7a) from Rattus norvegicus (Rat).